A 244-amino-acid polypeptide reads, in one-letter code: Venom nerve growth factor (244 aa).

Residues 1–18 (MSMLCYTLIIAFLIGIWA) form the signal peptide. Residues 19–125 (APKSEDNVSL…SLNRNIRAKR (107 aa)) constitute a propeptide that is removed on maturation. 3 disulfides stabilise this stretch: cysteine 139/cysteine 204, cysteine 182/cysteine 232, and cysteine 192/cysteine 234. An N-linked (GlcNAc...) asparagine glycan is attached at asparagine 148.

This sequence belongs to the NGF-beta family. Homodimer; non-covalently linked. In terms of processing, N-glycosylated. In terms of tissue distribution, expressed by the venom gland.

It is found in the secreted. Functionally, nerve growth factor is important for the development and maintenance of the sympathetic and sensory nervous systems. It stimulates division and differentiation of sympathetic and embryonic sensory neurons as well as basal forebrain cholinergic neurons in the brain. Its relevance in the snake venom is not clear. However, it has been shown to inhibit metalloproteinase-dependent proteolysis of platelet glycoprotein Ib alpha, suggesting a metalloproteinase inhibition to prevent metalloprotease autodigestion and/or protection against prey proteases. Binds a lipid between the two protein chains in the homodimer. The lipid-bound form promotes histamine relase from mouse mast cells, contrary to the lipid-free form. It promotes neurite outgrowth in rat PC12 pheochromocytoma cells. In Macrovipera lebetinus (Levantine viper), this protein is Venom nerve growth factor.